Here is a 128-residue protein sequence, read N- to C-terminus: Sulfurtransferase TusD (128 aa).

The active-site Cysteine persulfide intermediate is the Cys78.

Belongs to the DsrE/TusD family. As to quaternary structure, heterohexamer, formed by a dimer of trimers. The hexameric TusBCD complex contains 2 copies each of TusB, TusC and TusD. The TusBCD complex interacts with TusE.

Its subcellular location is the cytoplasm. Its function is as follows. Part of a sulfur-relay system required for 2-thiolation of 5-methylaminomethyl-2-thiouridine (mnm(5)s(2)U) at tRNA wobble positions. Accepts sulfur from TusA and transfers it in turn to TusE. This chain is Sulfurtransferase TusD, found in Shigella boydii serotype 18 (strain CDC 3083-94 / BS512).